Consider the following 156-residue polypeptide: Putative pre-16S rRNA nuclease (156 aa).

The protein belongs to the YqgF nuclease family.

It is found in the cytoplasm. In terms of biological role, could be a nuclease involved in processing of the 5'-end of pre-16S rRNA. This is Putative pre-16S rRNA nuclease from Streptomyces avermitilis (strain ATCC 31267 / DSM 46492 / JCM 5070 / NBRC 14893 / NCIMB 12804 / NRRL 8165 / MA-4680).